The sequence spans 330 residues: Ketol-acid reductoisomerase (NADP(+)) (330 aa).

Residues 1 to 181 (MKVLYDDDVN…GLTRAGVIET (181 aa)) form the KARI N-terminal Rossmann domain. NADP(+)-binding positions include 24-27 (YGSQ), arginine 47, serine 52, and 82-85 (DEIQ). Histidine 107 is a catalytic residue. Glycine 133 is an NADP(+) binding site. The KARI C-terminal knotted domain occupies 182-327 (TYREETETDL…KNLRIACGLQ (146 aa)). Residues aspartate 190, glutamate 194, glutamate 226, and glutamate 230 each coordinate Mg(2+). A substrate-binding site is contributed by serine 251.

This sequence belongs to the ketol-acid reductoisomerase family. It depends on Mg(2+) as a cofactor.

It carries out the reaction (2R)-2,3-dihydroxy-3-methylbutanoate + NADP(+) = (2S)-2-acetolactate + NADPH + H(+). The enzyme catalyses (2R,3R)-2,3-dihydroxy-3-methylpentanoate + NADP(+) = (S)-2-ethyl-2-hydroxy-3-oxobutanoate + NADPH + H(+). It participates in amino-acid biosynthesis; L-isoleucine biosynthesis; L-isoleucine from 2-oxobutanoate: step 2/4. The protein operates within amino-acid biosynthesis; L-valine biosynthesis; L-valine from pyruvate: step 2/4. Involved in the biosynthesis of branched-chain amino acids (BCAA). Catalyzes an alkyl-migration followed by a ketol-acid reduction of (S)-2-acetolactate (S2AL) to yield (R)-2,3-dihydroxy-isovalerate. In the isomerase reaction, S2AL is rearranged via a Mg-dependent methyl migration to produce 3-hydroxy-3-methyl-2-ketobutyrate (HMKB). In the reductase reaction, this 2-ketoacid undergoes a metal-dependent reduction by NADPH to yield (R)-2,3-dihydroxy-isovalerate. This chain is Ketol-acid reductoisomerase (NADP(+)), found in Methanosphaera stadtmanae (strain ATCC 43021 / DSM 3091 / JCM 11832 / MCB-3).